A 461-amino-acid chain; its full sequence is Argininosuccinate lyase (461 aa).

This sequence belongs to the lyase 1 family. Argininosuccinate lyase subfamily.

Its subcellular location is the cytoplasm. The enzyme catalyses 2-(N(omega)-L-arginino)succinate = fumarate + L-arginine. Its pathway is amino-acid biosynthesis; L-arginine biosynthesis; L-arginine from L-ornithine and carbamoyl phosphate: step 3/3. This Streptococcus gordonii (strain Challis / ATCC 35105 / BCRC 15272 / CH1 / DL1 / V288) protein is Argininosuccinate lyase.